The sequence spans 491 residues: Protein translocase subunit SecY (491 aa).

Over 1 to 20 (MGWKEAAAPVLTRMPAVERP) the chain is Cytoplasmic. Residues 21–47 (EGHVPFRRKMYWTGGVLVLYFFLTNVP) form a helical membrane-spanning segment. Topologically, residues 48–58 (LWGIQTAGNDF) are extracellular. The segment at residues 59–66 (FGQFRSLL) is an intramembrane region (helical). Residues 59–87 (FGQFRSLLAGGQGTVLQLGIGPIVTASIV) traverse the membrane as a discontinuously helical segment. An intramembrane segment occupies 67 to 78 (AGGQGTVLQLGI). Residues 79–87 (GPIVTASIV) constitute an intramembrane region (helical). At 88-109 (LQLLGGANLLGLDTDNDPRDQA) the chain is on the cytoplasmic side. A helical membrane pass occupies residues 110-134 (IYQGLQKFLVGVMVVLTGAPMVFLG). Residues 135 to 152 (NFLQPSQQLAQSMPGGAF) lie on the Extracellular side of the membrane. Residues 153–177 (GVEVLIFAQIAAGGILLLFMDEVIS) form a helical membrane-spanning segment. Residues 178–183 (KWGVGS) are Cytoplasmic-facing. Residues 184-202 (GIGLFIVAGVSQSLVGGLV) traverse the membrane as a helical segment. Over 203–244 (FWEGGVGSQGLLPTWFDIIVGNVSNMPPLLSGSGIEFLLMQA) the chain is Extracellular. Residues 245-266 (GILGLLTTLFIYVVVVYAESVR) traverse the membrane as a helical segment. The Cytoplasmic portion of the chain corresponds to 267–291 (VEIPLSHARVKGARGRFPVKLIYAS). The chain crosses the membrane as a helical span at residues 292–313 (VLPMILVRALQANIQFLGQILN). Residues 314 to 365 (STLASMPTWLGVYGGNGQVTGGLFYYLAPIYSPNAWMWWTSGATAARWQVLI) lie on the Extracellular side of the membrane. Residues 366–385 (RIAIDLSFMIIGGAIFAIFW) traverse the membrane as a helical segment. Over 386 to 428 (VETADMGPDATARQIQNSGMQIPGFRKNQGVIEKVMERYIPQV) the chain is Cytoplasmic. A helical transmembrane segment spans residues 429 to 447 (TVIGGALVGLLAVMANMLG). The Extracellular segment spans residues 448-452 (TIGNV). The chain crosses the membrane as a helical span at residues 453-467 (SGTGLLLTISITYKL). Residues 468 to 491 (YEEIAEEQMMEMHPMMREMFGGGD) are Cytoplasmic-facing.

This sequence belongs to the SecY/SEC61-alpha family. In terms of assembly, component of the Sec protein translocase complex. Heterotrimer consisting of alpha (SecY), beta (SecG) and gamma (SecE) subunits. The heterotrimers can form oligomers, although 1 heterotrimer is thought to be able to translocate proteins. Interacts with the ribosome. May interact with SecDF, and other proteins may be involved.

It localises to the cell membrane. The central subunit of the protein translocation channel SecYEG. Consists of two halves formed by TMs 1-5 and 6-10. These two domains form a lateral gate at the front which open onto the bilayer between TMs 2 and 7, and are clamped together by SecE at the back. The channel is closed by both a pore ring composed of hydrophobic SecY resides and a short helix (helix 2A) on the extracellular side of the membrane which forms a plug. The plug probably moves laterally to allow the channel to open. The ring and the pore may move independently. The protein is Protein translocase subunit SecY of Halobacterium salinarum (strain ATCC 700922 / JCM 11081 / NRC-1) (Halobacterium halobium).